The sequence spans 926 residues: Serine/threonine-protein kinase/endoribonuclease IRE2 (926 aa).

A signal peptide spans 1-34 (MASAVRGSRPWPRLGLQLQFAALLLGTLSPQVHT). At 35–430 (LRPENLLLVS…TPDSYLGLGP (396 aa)) the chain is on the lumenal side. A helical transmembrane segment spans residues 431–451 (QDLLAASLTAVLLGGWILFVM). The Cytoplasmic segment spans residues 452-926 (RQQQPQVVEK…RRPCPGATGR (475 aa)). The segment covering 478–501 (DAQSLHSGASRRSQKRLQSPSKQA) has biased composition (polar residues). A disordered region spans residues 478–509 (DAQSLHSGASRRSQKRLQSPSKQAQPLDDPEA). In terms of domain architecture, Protein kinase spans 520–781 (FNPKDVLGRG…APQVLAHPFF (262 aa)). Residues 526 to 534 (LGRGAGGTF) and Lys548 contribute to the ATP site. Asp637 functions as the Proton acceptor in the catalytic mechanism. Residues 784-912 (RAKQLQFFQD…ESLFLPYYPP (129 aa)) enclose the KEN domain.

Belongs to the protein kinase superfamily. Ser/Thr protein kinase family. It depends on Mg(2+) as a cofactor. In terms of processing, autophosphorylated.

The protein resides in the endoplasmic reticulum membrane. It catalyses the reaction L-seryl-[protein] + ATP = O-phospho-L-seryl-[protein] + ADP + H(+). The enzyme catalyses L-threonyl-[protein] + ATP = O-phospho-L-threonyl-[protein] + ADP + H(+). Its activity is regulated as follows. The kinase domain is activated by trans-autophosphorylation. Kinase activity is required for activation of the endoribonuclease domain. Its function is as follows. Induces translational repression through 28S ribosomal RNA cleavage in response to ER stress. Pro-apoptotic. Appears to play no role in the unfolded-protein response, unlike closely related proteins. This chain is Serine/threonine-protein kinase/endoribonuclease IRE2, found in Homo sapiens (Human).